Here is a 248-residue protein sequence, read N- to C-terminus: MAENGASQETTQVAKHQEVGHKSLLQSDALYQYILETSVYPREPEPMKELREITAKHPWNLMTTSADEGQFLNMLLKLINAKNTMEIGVYTGYSLLATALALPDDGKILAMDINRENYEIGLPVIQKAGVAHKIDFREGPALPVLDLMVEDKSNHGTYDFIFVDADKDNYINYHKRIIELVKVGGVIGYDNTLWNGSVVAPPDAPLRKYVRYYRDFVLELNKALAADPRIEICMLPVGDGITLCRRVS.

Lys-22 contributes to the substrate binding site. S-adenosyl-L-methionine is bound by residues Thr-64, Glu-86, 88–89 (GV), Ser-94, Asp-112, and Ala-141. Substrate is bound at residue Asp-164. Asp-164 contributes to the a divalent metal cation binding site. Asp-166 contacts S-adenosyl-L-methionine. Residues Asp-190 and Asn-191 each contribute to the a divalent metal cation site. Asn-195 is a substrate binding site.

The protein belongs to the class I-like SAM-binding methyltransferase superfamily. Cation-dependent O-methyltransferase family. CCoAMT subfamily. The cofactor is a divalent metal cation. In terms of tissue distribution, mostly expressed in petal limbs and tubes, and, at low levels, in stems, roots and leaves.

Its subcellular location is the cytoplasm. The protein resides in the cytosol. The enzyme catalyses (E)-caffeoyl-CoA + S-adenosyl-L-methionine = (E)-feruloyl-CoA + S-adenosyl-L-homocysteine + H(+). It carries out the reaction (E)-5-hydroxyferuloyl-CoA + S-adenosyl-L-methionine = (E)-sinapoyl-CoA + S-adenosyl-L-homocysteine + H(+). The protein operates within aromatic compound metabolism; phenylpropanoid biosynthesis. Functionally, involved in the production of floral volatile phenylpropanoids in flowers of fragrant cultivars (e.g. cv. Mitchell and cv. V26) from cinnamic acid, a common precursor with the anthocyanin biosynthesis pathway involved in flower pigmentation. Methylates caffeoyl-CoA to feruloyl-CoA, also able to methylate 5-hydroxyferuloyl-CoA. In Petunia hybrida (Petunia), this protein is Caffeoyl-CoA O-methyltransferase 3.